A 471-amino-acid chain; its full sequence is Apyrase 1 (471 aa).

Residues 1-21 (MTAKRAIGRHESLADKVHRHR) lie on the Cytoplasmic side of the membrane. A helical; Signal-anchor for type II membrane protein membrane pass occupies residues 22 to 42 (GLLLVISIPIVLIALVLLLMP). Over 43–471 (GTSTSVSVIE…GSAIEAVSSP (429 aa)) the chain is Lumenal. 72-82 (VIFDAGSSGSR) is a binding site for ATP. Catalysis depends on Glu194, which acts as the Proton acceptor. 218–228 (GVVDLGGGSVQ) lines the ATP pocket. The N-linked (GlcNAc...) asparagine glycan is linked to Asn333.

The protein belongs to the GDA1/CD39 NTPase family. Ca(2+) serves as cofactor. Expressed in roots, root hairs, root cap, leaves, stems, trichomes, phloem throughout the plant, guard cells, filaments of young stamens, stipules, papillae of stigmas, pollen, pollen tubes and the abscission zone of siliques.

Its subcellular location is the golgi apparatus membrane. It localises to the membrane. The catalysed reaction is a ribonucleoside 5'-triphosphate + 2 H2O = a ribonucleoside 5'-phosphate + 2 phosphate + 2 H(+). In terms of biological role, catalyzes the hydrolysis of phosphoanhydride bonds of nucleoside tri- and di-phosphates. Substrate preference is ATP &gt; ADP. Functions with APY2 to reduce extracellular ATP level which is essential for pollen germination and normal plant development. Plays a role in the regulation of stomatal function by modulating extracellular ATP levels in guard cells. In Arabidopsis thaliana (Mouse-ear cress), this protein is Apyrase 1 (APY1).